Reading from the N-terminus, the 284-residue chain is Spermidine/putrescine transport system permease protein PotC homolog (284 aa).

Transmembrane regions (helical) follow at residues 13–33 (YFFL…LVSL), 76–96 (IIIG…SAFA), 116–136 (LATP…NTWL), 143–163 (GFFT…LILI), 189–209 (FFHI…LVVF), and 242–262 (AWAI…VCLI). Positions 72–263 (LINSIIIGVI…ISVLGVCLIT (192 aa)) constitute an ABC transmembrane type-1 domain.

Belongs to the binding-protein-dependent transport system permease family. CysTW subfamily.

The protein localises to the cell membrane. In terms of biological role, required for the activity of the bacterial transport system of putrescine and spermidine. This Mycoplasma genitalium (strain ATCC 33530 / DSM 19775 / NCTC 10195 / G37) (Mycoplasmoides genitalium) protein is Spermidine/putrescine transport system permease protein PotC homolog (potC).